The chain runs to 92 residues: Cell division protein FtsB (92 aa).

The Cytoplasmic portion of the chain corresponds to Met1–Val3. The helical transmembrane segment at Val4–Phe21 threads the bilayer. Over Gly22–Glu92 the chain is Periplasmic. The stretch at Ala31–Glu74 forms a coiled coil.

Belongs to the FtsB family. As to quaternary structure, part of a complex composed of FtsB, FtsL and FtsQ.

The protein localises to the cell inner membrane. Functionally, essential cell division protein. May link together the upstream cell division proteins, which are predominantly cytoplasmic, with the downstream cell division proteins, which are predominantly periplasmic. The polypeptide is Cell division protein FtsB (Pseudoalteromonas atlantica (strain T6c / ATCC BAA-1087)).